We begin with the raw amino-acid sequence, 156 residues long: MSRRNAAEKRPVLPDPQFNNRLATMMISRLMKHGKKSTAQRILAQAFGLINERTGGDPIELFETAVKNATPLVEVRARRVGGATYQVPMEVRQERGTAMALRWLVNFSRARNGRSMSQKLAAELMDAANEAGSAVRKREETHKMAEANKAFAHYRY.

Belongs to the universal ribosomal protein uS7 family. As to quaternary structure, part of the 30S ribosomal subunit. Contacts proteins S9 and S11.

Functionally, one of the primary rRNA binding proteins, it binds directly to 16S rRNA where it nucleates assembly of the head domain of the 30S subunit. Is located at the subunit interface close to the decoding center, probably blocks exit of the E-site tRNA. This chain is Small ribosomal subunit protein uS7, found in Prochlorococcus marinus (strain MIT 9303).